Reading from the N-terminus, the 86-residue chain is Small ribosomal subunit protein bS20 (86 aa).

Positions Met1–Ala11 are enriched in basic residues. Residues Met1 to Arg27 form a disordered region.

It belongs to the bacterial ribosomal protein bS20 family.

Functionally, binds directly to 16S ribosomal RNA. This Syntrophobacter fumaroxidans (strain DSM 10017 / MPOB) protein is Small ribosomal subunit protein bS20.